Reading from the N-terminus, the 362-residue chain is Sulfate/thiosulfate import ATP-binding protein CysA (362 aa).

One can recognise an ABC transporter domain in the interval 13–243 (ITVRDAYKRY…PTNAFVMSFL (231 aa)). Residue 45-52 (GPSGSGKS) participates in ATP binding.

It belongs to the ABC transporter superfamily. Sulfate/tungstate importer (TC 3.A.1.6) family. In terms of assembly, the complex is composed of two ATP-binding proteins (CysA), two transmembrane proteins (CysT and CysW) and a solute-binding protein (CysP).

It is found in the cell membrane. It catalyses the reaction sulfate(out) + ATP + H2O = sulfate(in) + ADP + phosphate + H(+). The catalysed reaction is thiosulfate(out) + ATP + H2O = thiosulfate(in) + ADP + phosphate + H(+). In terms of biological role, part of the ABC transporter complex CysAWTP involved in sulfate/thiosulfate import. Responsible for energy coupling to the transport system. The polypeptide is Sulfate/thiosulfate import ATP-binding protein CysA (Mycolicibacterium paratuberculosis (strain ATCC BAA-968 / K-10) (Mycobacterium paratuberculosis)).